The chain runs to 446 residues: Tetratricopeptide repeat protein 23 (446 aa).

TPR repeat units follow at residues 45-78, 137-170, 186-219, 310-347, and 356-389; these read LRLS…TRIC, VELF…SKEM, ARIK…TEIS, TAKF…KVAV, and AETY…QTLL. The tract at residues 410-446 is disordered; sequence APEVPARPRPSPGAKAAFCAGGRPYSVPGRTRPSAAD.

In terms of assembly, associated with the EvC complex composed of EFCAB7, IQCE, EVC2 and EVC.

Its subcellular location is the cell projection. It is found in the cilium. In terms of biological role, participates positively in the ciliary Hedgehog (Hh) signaling. In Bos taurus (Bovine), this protein is Tetratricopeptide repeat protein 23 (TTC23).